The primary structure comprises 418 residues: Methionine aminopeptidase 2 (418 aa).

A disordered region spans residues 18–49; that stretch reads VSEPAAVDDSEVTEDATVQDKKKKKKKKKKKG. The segment covering 38–49 has biased composition (basic residues); it reads KKKKKKKKKKKG. Histidine 172 lines the substrate pocket. Residues aspartate 192, aspartate 203, and histidine 272 each coordinate a divalent metal cation. Histidine 280 provides a ligand contact to substrate. A divalent metal cation contacts are provided by glutamate 305 and glutamate 399.

This sequence belongs to the peptidase M24A family. Methionine aminopeptidase eukaryotic type 2 subfamily. Requires Co(2+) as cofactor. The cofactor is Zn(2+). It depends on Mn(2+) as a cofactor. Fe(2+) is required as a cofactor.

Its subcellular location is the cytoplasm. The catalysed reaction is Release of N-terminal amino acids, preferentially methionine, from peptides and arylamides.. Cotranslationally removes the N-terminal methionine from nascent proteins. The N-terminal methionine is often cleaved when the second residue in the primary sequence is small and uncharged (Met-Ala-, Cys, Gly, Pro, Ser, Thr, or Val). This Kluyveromyces lactis (strain ATCC 8585 / CBS 2359 / DSM 70799 / NBRC 1267 / NRRL Y-1140 / WM37) (Yeast) protein is Methionine aminopeptidase 2.